Reading from the N-terminus, the 208-residue chain is Large ribosomal subunit protein uL3 (208 aa).

Residue glutamine 149 is modified to N5-methylglutamine.

This sequence belongs to the universal ribosomal protein uL3 family. In terms of assembly, part of the 50S ribosomal subunit. Forms a cluster with proteins L14 and L19. Methylated by PrmB.

One of the primary rRNA binding proteins, it binds directly near the 3'-end of the 23S rRNA, where it nucleates assembly of the 50S subunit. This is Large ribosomal subunit protein uL3 from Mannheimia succiniciproducens (strain KCTC 0769BP / MBEL55E).